Here is a 503-residue protein sequence, read N- to C-terminus: uncharacterized protein (503 aa).

A run of 12 helical transmembrane segments spans residues Phe-20–Met-40, Leu-43–Leu-63, Val-106–Ala-126, Leu-138–Phe-158, Ala-166–Ile-186, Val-215–Ile-235, Leu-249–Ile-269, Tyr-301–Ser-321, Val-359–Leu-379, Leu-405–Leu-425, Gly-443–Trp-463, and Thr-468–Ser-488.

The protein to M.genitalium MG225.

It localises to the cell membrane. This is an uncharacterized protein from Mycoplasma pneumoniae (strain ATCC 29342 / M129 / Subtype 1) (Mycoplasmoides pneumoniae).